The primary structure comprises 401 residues: Phosphoglycerate kinase (401 aa).

Substrate-binding positions include aspartate 21 to asparagine 23, arginine 36, histidine 59 to arginine 62, arginine 116, and arginine 156. Residues glutamate 331 and glycine 357–threonine 360 contribute to the ATP site.

Belongs to the phosphoglycerate kinase family.

It localises to the cytoplasm. The enzyme catalyses (2R)-3-phosphoglycerate + ATP = (2R)-3-phospho-glyceroyl phosphate + ADP. It participates in carbohydrate degradation; glycolysis; pyruvate from D-glyceraldehyde 3-phosphate: step 2/5. The sequence is that of Phosphoglycerate kinase (pgk) from Haloarcula vallismortis (Halobacterium vallismortis).